The following is a 684-amino-acid chain: Chaperone protein HtpG (684 aa).

Residues Met-1–Arg-329 form an a; substrate-binding region. The b stretch occupies residues Ser-330 to Gln-548. The interval Leu-549–Leu-684 is c.

Belongs to the heat shock protein 90 family. Homodimer.

It is found in the cytoplasm. Its function is as follows. Molecular chaperone. Has ATPase activity. In Porphyromonas gingivalis (strain ATCC 33277 / DSM 20709 / CIP 103683 / JCM 12257 / NCTC 11834 / 2561), this protein is Chaperone protein HtpG.